A 257-amino-acid polypeptide reads, in one-letter code: Type III pantothenate kinase (257 aa).

Position 6-13 (6-13 (DAGNTNIV)) interacts with ATP. Substrate contacts are provided by residues tyrosine 100 and 107 to 110 (GADR). Aspartate 109 serves as the catalytic Proton acceptor. Residue aspartate 129 participates in K(+) binding. Threonine 132 serves as a coordination point for ATP. Threonine 184 provides a ligand contact to substrate.

Belongs to the type III pantothenate kinase family. In terms of assembly, homodimer. The cofactor is NH4(+). K(+) serves as cofactor.

The protein localises to the cytoplasm. It catalyses the reaction (R)-pantothenate + ATP = (R)-4'-phosphopantothenate + ADP + H(+). It functions in the pathway cofactor biosynthesis; coenzyme A biosynthesis; CoA from (R)-pantothenate: step 1/5. Catalyzes the phosphorylation of pantothenate (Pan), the first step in CoA biosynthesis. The sequence is that of Type III pantothenate kinase from Clostridium botulinum (strain Alaska E43 / Type E3).